A 414-amino-acid chain; its full sequence is Glucose-1-phosphate adenylyltransferase (414 aa).

Residues tyrosine 103, glycine 168, 183 to 184 (EK), and serine 201 contribute to the alpha-D-glucose 1-phosphate site.

This sequence belongs to the bacterial/plant glucose-1-phosphate adenylyltransferase family. As to quaternary structure, homotetramer.

It carries out the reaction alpha-D-glucose 1-phosphate + ATP + H(+) = ADP-alpha-D-glucose + diphosphate. It functions in the pathway glycan biosynthesis; glycogen biosynthesis. Functionally, involved in the biosynthesis of ADP-glucose, a building block required for the elongation reactions to produce glycogen. Catalyzes the reaction between ATP and alpha-D-glucose 1-phosphate (G1P) to produce pyrophosphate and ADP-Glc. This is Glucose-1-phosphate adenylyltransferase from Thermus caldophilus.